A 1080-amino-acid polypeptide reads, in one-letter code: Isoleucine--tRNA ligase (1080 aa).

The short motif at 48–58 is the 'HIGH' region element; the sequence is PYASGSIHLGT. Residues 628–632 carry the 'KMSKS' region motif; that stretch reads KMSKS. An ATP-binding site is contributed by K631.

Belongs to the class-I aminoacyl-tRNA synthetase family. IleS type 2 subfamily. In terms of assembly, monomer. It depends on Zn(2+) as a cofactor.

It localises to the cytoplasm. The enzyme catalyses tRNA(Ile) + L-isoleucine + ATP = L-isoleucyl-tRNA(Ile) + AMP + diphosphate. In terms of biological role, catalyzes the attachment of isoleucine to tRNA(Ile). As IleRS can inadvertently accommodate and process structurally similar amino acids such as valine, to avoid such errors it has two additional distinct tRNA(Ile)-dependent editing activities. One activity is designated as 'pretransfer' editing and involves the hydrolysis of activated Val-AMP. The other activity is designated 'posttransfer' editing and involves deacylation of mischarged Val-tRNA(Ile). In Methanopyrus kandleri (strain AV19 / DSM 6324 / JCM 9639 / NBRC 100938), this protein is Isoleucine--tRNA ligase.